The chain runs to 122 residues: Large ribosomal subunit protein uL14 (122 aa).

It belongs to the universal ribosomal protein uL14 family. Part of the 50S ribosomal subunit. Forms a cluster with proteins L3 and L19. In the 70S ribosome, L14 and L19 interact and together make contacts with the 16S rRNA in bridges B5 and B8.

Binds to 23S rRNA. Forms part of two intersubunit bridges in the 70S ribosome. The protein is Large ribosomal subunit protein uL14 of Shewanella frigidimarina (strain NCIMB 400).